Consider the following 417-residue polypeptide: UDP-N-acetylmuramoylalanine--D-glutamate ligase (417 aa).

Position 108–114 (108–114 (GSNGKTT)) interacts with ATP.

Belongs to the MurCDEF family.

The protein resides in the cytoplasm. It catalyses the reaction UDP-N-acetyl-alpha-D-muramoyl-L-alanine + D-glutamate + ATP = UDP-N-acetyl-alpha-D-muramoyl-L-alanyl-D-glutamate + ADP + phosphate + H(+). It participates in cell wall biogenesis; peptidoglycan biosynthesis. Its function is as follows. Cell wall formation. Catalyzes the addition of glutamate to the nucleotide precursor UDP-N-acetylmuramoyl-L-alanine (UMA). This Chlamydia pneumoniae (Chlamydophila pneumoniae) protein is UDP-N-acetylmuramoylalanine--D-glutamate ligase.